A 507-amino-acid chain; its full sequence is Light-independent protochlorophyllide reductase subunit B (507 aa).

D36 provides a ligand contact to [4Fe-4S] cluster. D293 serves as the catalytic Proton donor. 428–429 is a binding site for substrate; sequence GM.

It belongs to the ChlB/BchB/BchZ family. In terms of assembly, protochlorophyllide reductase is composed of three subunits; ChlL, ChlN and ChlB. Forms a heterotetramer of two ChlB and two ChlN subunits. Requires [4Fe-4S] cluster as cofactor.

The protein resides in the plastid. It is found in the chloroplast. It catalyses the reaction chlorophyllide a + oxidized 2[4Fe-4S]-[ferredoxin] + 2 ADP + 2 phosphate = protochlorophyllide a + reduced 2[4Fe-4S]-[ferredoxin] + 2 ATP + 2 H2O. It functions in the pathway porphyrin-containing compound metabolism; chlorophyll biosynthesis (light-independent). Functionally, component of the dark-operative protochlorophyllide reductase (DPOR) that uses Mg-ATP and reduced ferredoxin to reduce ring D of protochlorophyllide (Pchlide) to form chlorophyllide a (Chlide). This reaction is light-independent. The NB-protein (ChlN-ChlB) is the catalytic component of the complex. The protein is Light-independent protochlorophyllide reductase subunit B of Porphyra purpurea (Red seaweed).